The sequence spans 355 residues: S-adenosylmethionine:tRNA ribosyltransferase-isomerase (355 aa).

Belongs to the QueA family. As to quaternary structure, monomer.

Its subcellular location is the cytoplasm. It carries out the reaction 7-aminomethyl-7-carbaguanosine(34) in tRNA + S-adenosyl-L-methionine = epoxyqueuosine(34) in tRNA + adenine + L-methionine + 2 H(+). It functions in the pathway tRNA modification; tRNA-queuosine biosynthesis. Functionally, transfers and isomerizes the ribose moiety from AdoMet to the 7-aminomethyl group of 7-deazaguanine (preQ1-tRNA) to give epoxyqueuosine (oQ-tRNA). In Erwinia tasmaniensis (strain DSM 17950 / CFBP 7177 / CIP 109463 / NCPPB 4357 / Et1/99), this protein is S-adenosylmethionine:tRNA ribosyltransferase-isomerase.